Here is a 509-residue protein sequence, read N- to C-terminus: Glycogen synthase (509 aa).

Residue Lys-47 coordinates ADP-alpha-D-glucose.

The protein belongs to the glycosyltransferase 1 family. Bacterial/plant glycogen synthase subfamily.

The enzyme catalyses [(1-&gt;4)-alpha-D-glucosyl](n) + ADP-alpha-D-glucose = [(1-&gt;4)-alpha-D-glucosyl](n+1) + ADP + H(+). Its pathway is glycan biosynthesis; glycogen biosynthesis. Functionally, synthesizes alpha-1,4-glucan chains using ADP-glucose. This is Glycogen synthase from Xanthomonas euvesicatoria pv. vesicatoria (strain 85-10) (Xanthomonas campestris pv. vesicatoria).